A 590-amino-acid chain; its full sequence is CTP synthase (590 aa).

Positions 1–281 are amidoligase domain; the sequence is MPALRKHPQT…DAYVVRRLNL (281 aa). Ser-23 contacts CTP. Ser-23 provides a ligand contact to UTP. ATP is bound by residues 24 to 29 and Asp-81; that span reads SLGKGL. Asp-81 and Glu-155 together coordinate Mg(2+). CTP-binding positions include 162–164, 202–207, and Lys-238; these read DIE and KTKPTQ. Residues 202 to 207 and Lys-238 each bind UTP; that span reads KTKPTQ. Positions 306-554 constitute a Glutamine amidotransferase type-1 domain; sequence RIALVGKYID…IGAAIDYKAA (249 aa). Gly-369 contacts L-glutamine. Cys-396 acts as the Nucleophile; for glutamine hydrolysis in catalysis. L-glutamine-binding positions include 397–400, Glu-419, and Arg-480; that span reads LGLQ. Active-site residues include His-527 and Glu-529.

This sequence belongs to the CTP synthase family. In terms of assembly, homotetramer.

It carries out the reaction UTP + L-glutamine + ATP + H2O = CTP + L-glutamate + ADP + phosphate + 2 H(+). The catalysed reaction is L-glutamine + H2O = L-glutamate + NH4(+). The enzyme catalyses UTP + NH4(+) + ATP = CTP + ADP + phosphate + 2 H(+). It participates in pyrimidine metabolism; CTP biosynthesis via de novo pathway; CTP from UDP: step 2/2. Allosterically activated by GTP, when glutamine is the substrate; GTP has no effect on the reaction when ammonia is the substrate. The allosteric effector GTP functions by stabilizing the protein conformation that binds the tetrahedral intermediate(s) formed during glutamine hydrolysis. Inhibited by the product CTP, via allosteric rather than competitive inhibition. Catalyzes the ATP-dependent amination of UTP to CTP with either L-glutamine or ammonia as the source of nitrogen. Regulates intracellular CTP levels through interactions with the four ribonucleotide triphosphates. This is CTP synthase from Mycolicibacterium smegmatis (strain ATCC 700084 / mc(2)155) (Mycobacterium smegmatis).